We begin with the raw amino-acid sequence, 493 residues long: Glutamyl-tRNA(Gln) amidotransferase subunit A (493 aa).

Catalysis depends on charge relay system residues lysine 79 and serine 159. Serine 183 (acyl-ester intermediate) is an active-site residue.

The protein belongs to the amidase family. GatA subfamily. Heterotrimer of A, B and C subunits.

The enzyme catalyses L-glutamyl-tRNA(Gln) + L-glutamine + ATP + H2O = L-glutaminyl-tRNA(Gln) + L-glutamate + ADP + phosphate + H(+). In terms of biological role, allows the formation of correctly charged Gln-tRNA(Gln) through the transamidation of misacylated Glu-tRNA(Gln) in organisms which lack glutaminyl-tRNA synthetase. The reaction takes place in the presence of glutamine and ATP through an activated gamma-phospho-Glu-tRNA(Gln). The polypeptide is Glutamyl-tRNA(Gln) amidotransferase subunit A (Brucella suis (strain ATCC 23445 / NCTC 10510)).